The following is an 84-amino-acid chain: Toxin Tst1 (84 aa).

A signal peptide spans 1–19 (MKGMILFISCLLLIDIVVG). The region spanning 21–82 (KEGYLMDHEG…VWDRATNKCG (62 aa)) is the LCN-type CS-alpha/beta domain. Disulfide bonds link Cys-31/Cys-81, Cys-35/Cys-57, Cys-43/Cys-62, and Cys-47/Cys-64. At Cys-81 the chain carries Cysteine amide.

Expressed by the venom gland.

Its subcellular location is the secreted. Functionally, beta toxins bind voltage-independently at site-4 of sodium channels (Nav) and shift the voltage of activation toward more negative potentials thereby affecting sodium channel activation and promoting spontaneous and repetitive firing. This toxin is active only on mammals. Is toxic to mice. In Tityus stigmurus (Brazilian scorpion), this protein is Toxin Tst1.